Here is a 130-residue protein sequence, read N- to C-terminus: Small ribosomal subunit protein uS9 (130 aa).

The segment at 111–130 is disordered; sequence KERRKYGLKKARKAPQFSKR.

It belongs to the universal ribosomal protein uS9 family.

The sequence is that of Small ribosomal subunit protein uS9 from Thermoanaerobacter sp. (strain X514).